The chain runs to 271 residues: Potential ATP-binding protein (271 aa).

34–41 (GQPGVGKT) contributes to the ATP binding site.

This is Potential ATP-binding protein from Staphylococcus aureus.